The following is a 721-amino-acid chain: Glycine--tRNA ligase beta subunit (721 aa).

Belongs to the class-II aminoacyl-tRNA synthetase family. In terms of assembly, tetramer of two alpha and two beta subunits.

It is found in the cytoplasm. The catalysed reaction is tRNA(Gly) + glycine + ATP = glycyl-tRNA(Gly) + AMP + diphosphate. The protein is Glycine--tRNA ligase beta subunit of Sinorhizobium medicae (strain WSM419) (Ensifer medicae).